A 333-amino-acid polypeptide reads, in one-letter code: Trans-enoyl reductase apdC (333 aa).

Residue 45-48 (FDAK) coordinates NADP(+). Substrate is bound at residue 131-138 (VGLATVGM). NADP(+)-binding positions include 167–170 (SPHN), Tyr-185, and 232–233 (LD). Residue 252–256 (SVTMY) coordinates substrate. Position 321 to 322 (321 to 322 (VS)) interacts with NADP(+).

The protein belongs to the zinc-containing alcohol dehydrogenase family. Monomer.

Its pathway is secondary metabolite biosynthesis. Its function is as follows. Trans-enoyl reductase; part of the gene cluster that mediates the biosynthesis of aspyridones. The polyketide-amino acid backbone preaspyridone A is first assembled by the PKS-NRPS hybrid apdA. The assembly of preaspyridone A is initiated by loading of malonyl-CoA onto apdA, followed by decarboxylation to yield the acetyl starter unit. The growing polyketide chain then elongates into a tetraketide. The adpA PKS module catalyzes three Claisen condensations, as well as beta-keto processing and methylation. Alpha-methylation step during polyketide synthesis is a prerequisite and a key checkpoint for chain transfer between PKS and NRPS modules. The downstream NRPS module contains the condensation (C), adenylation (A), and thiolation (T) domains and catalyzes the incorporation of tyrosine via the formation of the L-tyrosinyl-thioester and the amide linkage between L-tyrosinyl-thioester and the tetraketide. The bimodular assembly line is terminated with a reductase (R) domain that facilitates formation and release of the tetramic acid product. Because apdA lacks a designated enoylreductase (ER) domain, the required activity is provided the enoyl reductase apdC. ApdC appears to operate with different stereoselectivity in different PKS cycle. Combined with apdC, apdA is proposed to synthesize preaspyridone A via about 20 enzymatic steps. A number of oxidative steps performed successively by the cytochrome P450 monooxygenases apdE and apdB are required for the conversion of preaspyridone A to aspyridone A. The cytochrome P450 monooxygenase apdE is responsible for the oxidative dephenylation of preaspyridone A. Finally, the predicted FAD-dependent monooxygenase apdD and the acyl-CoA dehydrogenase apdG may be involved in the transformation of aspyridone A into aspyridone B. This Emericella nidulans (strain FGSC A4 / ATCC 38163 / CBS 112.46 / NRRL 194 / M139) (Aspergillus nidulans) protein is Trans-enoyl reductase apdC.